Consider the following 1827-residue polypeptide: MLLRLELSALLLLLIAAPVRLQDECVGNSCYPNLGDLMVGRAAQLAASSTCGLYRPQNYCILGYLENERKCFTCDSRSPYNDYHNPSSHRIENIITTFQPERKMKWWQSENGVHEVSIQLDLEAMFQFSHLILTFKSFRPASMLVERSKDFGRTWKVFRYFAEDCANSFPGISEGPAHSIDDLVCDSRYSGAEPSTEGEVVLKALDPSFDIHDPYDSTIQGLITLTNLRVNFTRLLTLGDTLLTRRKRNPQDKYYYALYEMVVRGSCFCNGHASQCIPVDGARGDTFTEPGMVHGRCVCQHNTAGYNCERCQDFYHDAPWRPGGKADSDVCKRCNCHSHSEKCHFELARYLATGGVSGGVCDDCRNNRIGPQCELCGPFYYQDPQRSVDDPYACIPCDCDLDGSVDRGLCDPVNGQCVCKQNIEGERCDRCKVGFYGFSRDDPSGCQLCRCNFLGTIQVGNPCDPTTGRCICEHFAYGSQCDQCLPGYWGLGNTVYGCIPCDCDIGGALKTECSSVDGQCKCRPNMVGQKCNDPAPGYFLAPLDFYIYEAENAAPLAVISPFIGPPPFVYPTEGIPERPTKLPLCPPAPKPSSVPYREHITVQPSPAPHNPQVTLPMCEHYFRQRGYDFKISNGRLVVVKREKRQTRRRRQGQRTIPFEPGSPLQILLRQRANDQSITWTGLGFVRVQDGAGLRFTVSNIPATLDYYVVVRYEPESTDDWTAIVSILSIGSEDERCPNDQSNKMFTLPASGRTATLDLPVCLSDGNQYHVDITFRKQPSEDPHSSSFILIDSLGLIPKVESVPNFCSQSYLSQFQQYRCIELAVQAGGQTLPEVCEMLIGSMSAFIHNGAVSCNCHHVGAYGSSCSKFGGQCQCKPNVIGRCCDSCAPLTYGLGPNGCSPCDCDRSGSTTELCDQTTGQCSCRDGITGLQCNRCYPGYYGFPLCRRCQCNRLADICDPITGDCLDCREHSAGRNCERCEEGYVGDPVSGQPCEPCLCPDLNGSGRFFAFSCNKDPRSGAPYCECLPGHTGPQCDSCSPGFYGDLRLPGGRCKECCCNNNIDPRDGDACDPVTGECLRCLHNTEGPRCQSCKRGYYGNALAQDCKECSCDRRGTDDSKCPAGSPCFCDQDTGQCPCRPGVQGALCNECDDGYWNMDGDYGCQPCNCNREHALNYICDKITGQCLCQPEYGGRICDECGPNHFGNPDLQCMFCDCNLEGTVHPACDAYTGECLCKPGVTGPFCDECAPGHNNNFPACEPCHACNHLWEKIISDLSLDAERIETMMPCPEDFRSRPELQHLQNLLEKLQNVLNMGAQDELKKLEELLARIRNETEIIDPNIIIIDPTLLLNTDIDYIRLEFNKLLKNLREKAKEGPVTDIKAVNDIFNKIKKFYDEFTDSEKKVEAAKKVQEASRKTREKVTLELAKCQIGEMDKLERKVKALSAANINEEVCGAPGDAECEKAKCGGALCGKCGGPDCTGSLPISLNASKLAEMTEKNITALRSQLKEADAQLRNASEMTSYVKDQAENMMDKINRTKTKYEQEKTDTKALIEKVKTYLQDELVKPEDIEKLANAVLSIQLPKSPDEIKDMIEDIKKILANITEFNDDLEYLEKQAKIAGNMKERAKEILNRTELINVKEIEKALNDTAKLHDKIFNDLDEAEQNNDVIREKVNETEPKLKNIEDHLNLTRAKTLLDEIEALKNKTEMNRAQGKEAKDTADAALNSANDTGKDLEELKEQFEKLKLNSTNQNVSSEANERLKNITMEAENLAKHVEDKMKEIEDLEEKILLSNERKDEMRKELEALQKEADDLKKFIVDKVQRYNLCSP.

Positions 1 to 21 are cleaved as a signal peptide; sequence MLLRLELSALLLLLIAAPVRL. Residues 26–266 form the Laminin N-terminal domain; that stretch reads VGNSCYPNLG…ALYEMVVRGS (241 aa). A glycan (N-linked (GlcNAc...) asparagine) is linked at asparagine 231. Disulfide bonds link cysteine 267–cysteine 276, cysteine 269–cysteine 297, cysteine 299–cysteine 308, cysteine 311–cysteine 331, cysteine 334–cysteine 343, cysteine 336–cysteine 361, cysteine 364–cysteine 373, cysteine 376–cysteine 394, cysteine 397–cysteine 410, cysteine 399–cysteine 417, cysteine 419–cysteine 428, cysteine 431–cysteine 446, cysteine 449–cysteine 463, cysteine 451–cysteine 470, cysteine 472–cysteine 481, cysteine 484–cysteine 498, cysteine 501–cysteine 513, cysteine 503–cysteine 520, and cysteine 522–cysteine 531. 4 consecutive Laminin EGF-like domains span residues 267–333, 334–396, 397–448, and 449–500; these read CFCN…VCKR, CNCH…ACIP, CDCD…GCQL, and CRCN…GCIP. A Laminin EGF-like 5; truncated domain is found at 501-544; it reads CDCDIGGALKTECSSVDGQCKCRPNMVGQKCNDPAPGYFLAPLD. The region spanning 540–847 is the Laminin IV type B domain; that stretch reads LAPLDFYIYE…LIGSMSAFIH (308 aa). Intrachain disulfides connect cysteine 853–cysteine 865, cysteine 855–cysteine 872, cysteine 874–cysteine 883, cysteine 886–cysteine 898, cysteine 901–cysteine 913, cysteine 903–cysteine 920, cysteine 922–cysteine 931, cysteine 934–cysteine 944, cysteine 947–cysteine 956, cysteine 949–cysteine 963, cysteine 966–cysteine 975, cysteine 978–cysteine 992, cysteine 995–cysteine 1011, cysteine 997–cysteine 1022, cysteine 1024–cysteine 1033, cysteine 1036–cysteine 1051, cysteine 1054–cysteine 1068, cysteine 1056–cysteine 1075, cysteine 1078–cysteine 1087, cysteine 1090–cysteine 1103, cysteine 1106–cysteine 1126, cysteine 1108–cysteine 1133, cysteine 1135–cysteine 1144, cysteine 1147–cysteine 1160, cysteine 1163–cysteine 1175, cysteine 1165–cysteine 1182, cysteine 1184–cysteine 1193, cysteine 1196–cysteine 1208, cysteine 1211–cysteine 1223, cysteine 1213–cysteine 1230, cysteine 1232–cysteine 1241, and cysteine 1244–cysteine 1255. Laminin EGF-like domains lie at 853–900, 901–946, 947–994, 995–1053, 1054–1105, 1106–1162, 1163–1210, and 1211–1257; these read CNCH…GCSP, CDCD…LCRR, CQCN…PCEP, CLCP…RCKE, CCCN…DCKE, CSCD…GCQP, CNCN…QCMF, and CDCN…ACEP. N-linked (GlcNAc...) asparagine glycosylation occurs at asparagine 1001. The domain II stretch occupies residues 1258–1449; it reads CHACNHLWEK…LSAANINEEV (192 aa). Coiled-coil stretches lie at residues 1294–1335 and 1385–1449; these read ELQH…EIID and NKIK…NEEV. N-linked (GlcNAc...) asparagine glycosylation is present at asparagine 1329. The interval 1450 to 1476 is domain alpha; that stretch reads CGAPGDAECEKAKCGGALCGKCGGPDC. Residues 1477–1827 form a domain I region; the sequence is TGSLPISLNA…KVQRYNLCSP (351 aa). 14 N-linked (GlcNAc...) asparagine glycosylation sites follow: asparagine 1485, asparagine 1496, asparagine 1513, asparagine 1533, asparagine 1599, asparagine 1629, asparagine 1644, asparagine 1672, asparagine 1686, asparagine 1702, asparagine 1726, asparagine 1745, asparagine 1750, and asparagine 1761. Coiled coils occupy residues 1485–1554 and 1584–1820; these read NASK…EKVK and DEIK…DKVQ.

As to quaternary structure, laminin is a complex glycoprotein, consisting of three different polypeptide chains (alpha, beta, gamma), which are bound to each other by disulfide bonds into a cross-shaped molecule comprising one long and three short arms with globules at each end.

Its subcellular location is the secreted. It is found in the extracellular space. It localises to the extracellular matrix. The protein resides in the basement membrane. Its function is as follows. Binding to cells via a high affinity receptor, laminin is thought to mediate the attachment, migration and organization of cells into tissues during embryonic development by interacting with other extracellular matrix components. Positively regulates apical-basal distribution of Muller glia cells in the retina. In Danio rerio (Zebrafish), this protein is Laminin subunit beta-4 (lamb4).